Here is a 257-residue protein sequence, read N- to C-terminus: S-methyl-5'-thioadenosine phosphorylase (257 aa).

Phosphate-binding positions include serine 10 and 50-51; that span reads RH. Cysteine 130 and cysteine 195 form a disulfide bridge. A substrate-binding site is contributed by methionine 180. Phosphate is bound at residue threonine 181. 204–206 contributes to the substrate binding site; the sequence is DYD. Cysteine 246 and cysteine 248 are disulfide-bonded.

This sequence belongs to the PNP/MTAP phosphorylase family. MTAP subfamily. As to quaternary structure, homohexamer. Dimer of a homotrimer.

The catalysed reaction is S-methyl-5'-thioadenosine + phosphate = 5-(methylsulfanyl)-alpha-D-ribose 1-phosphate + adenine. The protein operates within amino-acid biosynthesis; L-methionine biosynthesis via salvage pathway; S-methyl-5-thio-alpha-D-ribose 1-phosphate from S-methyl-5'-thioadenosine (phosphorylase route): step 1/1. Its function is as follows. Catalyzes the reversible phosphorylation of S-methyl-5'-thioadenosine (MTA) to adenine and 5-methylthioribose-1-phosphate. Involved in the breakdown of MTA, a major by-product of polyamine biosynthesis. Responsible for the first step in the methionine salvage pathway after MTA has been generated from S-adenosylmethionine. Has broad substrate specificity with 6-aminopurine nucleosides as preferred substrates. The protein is S-methyl-5'-thioadenosine phosphorylase of Pyrococcus furiosus (strain ATCC 43587 / DSM 3638 / JCM 8422 / Vc1).